The following is a 214-amino-acid chain: EEF1A lysine methyltransferase 1 (214 aa).

An N-acetylserine modification is found at S2. S2 carries the phosphoserine modification.

This sequence belongs to the class I-like SAM-binding methyltransferase superfamily. EFM5 family.

It localises to the cytoplasm. It carries out the reaction L-lysyl-[protein] + 3 S-adenosyl-L-methionine = N(6),N(6),N(6)-trimethyl-L-lysyl-[protein] + 3 S-adenosyl-L-homocysteine + 3 H(+). Functionally, protein-lysine methyltransferase that selectively catalyzes the trimethylation of EEF1A at 'Lys-79'. The polypeptide is EEF1A lysine methyltransferase 1 (Mus musculus (Mouse)).